Here is a 168-residue protein sequence, read N- to C-terminus: uncharacterized protein (168 aa).

Disordered stretches follow at residues 37 to 74, 81 to 100, and 117 to 168; these read GGSK…SQFT, QYNY…PNYY, and MQPF…EETN. Composition is skewed to polar residues over residues 52–74 and 82–95; these read HSGQ…SQFT and YNYN…TRSV. The segment covering 120 to 129 has biased composition (low complexity); that stretch reads FNNQSFNNQS. Positions 130 to 158 are enriched in polar residues; that stretch reads RTHQSKTYQHNQQKRSFNGPRNNGPQNNV.

This is an uncharacterized protein from Acanthamoeba polyphaga (Amoeba).